The primary structure comprises 598 residues: Elongation factor 4 2 (598 aa).

One can recognise a tr-type G domain in the interval 2 to 184 (KHIRNFCIIA…GIVKNLPAPK (183 aa)). GTP-binding positions include 14–19 (DHGKST) and 131–134 (NKID).

The protein belongs to the TRAFAC class translation factor GTPase superfamily. Classic translation factor GTPase family. LepA subfamily.

It is found in the cell inner membrane. The catalysed reaction is GTP + H2O = GDP + phosphate + H(+). In terms of biological role, required for accurate and efficient protein synthesis under certain stress conditions. May act as a fidelity factor of the translation reaction, by catalyzing a one-codon backward translocation of tRNAs on improperly translocated ribosomes. Back-translocation proceeds from a post-translocation (POST) complex to a pre-translocation (PRE) complex, thus giving elongation factor G a second chance to translocate the tRNAs correctly. Binds to ribosomes in a GTP-dependent manner. This is Elongation factor 4 2 from Rhodopirellula baltica (strain DSM 10527 / NCIMB 13988 / SH1).